The chain runs to 300 residues: NAD kinase (300 aa).

The Proton acceptor role is filled by Asp78. Residues 78 to 79 (DG), 152 to 153 (ND), His163, Arg180, Asp182, and 193 to 198 (TAYALS) contribute to the NAD(+) site.

Belongs to the NAD kinase family. The cofactor is a divalent metal cation.

The protein localises to the cytoplasm. It carries out the reaction NAD(+) + ATP = ADP + NADP(+) + H(+). In terms of biological role, involved in the regulation of the intracellular balance of NAD and NADP, and is a key enzyme in the biosynthesis of NADP. Catalyzes specifically the phosphorylation on 2'-hydroxyl of the adenosine moiety of NAD to yield NADP. This Alcanivorax borkumensis (strain ATCC 700651 / DSM 11573 / NCIMB 13689 / SK2) protein is NAD kinase.